A 564-amino-acid chain; its full sequence is Formate--tetrahydrofolate ligase (564 aa).

Residue 65 to 72 coordinates ATP; it reads TPLGEGKT.

The protein belongs to the formate--tetrahydrofolate ligase family.

It catalyses the reaction (6S)-5,6,7,8-tetrahydrofolate + formate + ATP = (6R)-10-formyltetrahydrofolate + ADP + phosphate. The protein operates within one-carbon metabolism; tetrahydrofolate interconversion. The protein is Formate--tetrahydrofolate ligase of Roseiflexus castenholzii (strain DSM 13941 / HLO8).